The following is a 453-amino-acid chain: Homeobox protein meis3 (453 aa).

Residues 33 to 64 (HHSLSQSAPYGSTGAAHRVPMPPGMGSNDGLK) form a disordered region. Positions 102–185 (GGDVCSSDSF…PIDLVIDDRD (84 aa)) constitute an MEIS N-terminal domain. The disordered stretch occupies residues 192–272 (LEDFTGSCTS…RDKKRNKKRG (81 aa)). The span at 197-209 (GSCTSLSDQNNSW) shows a compositional bias: polar residues. Residues 218-230 (STHSGTPGPSSGG) show a composition bias toward low complexity. A compositionally biased stretch (polar residues) spans 231–242 (LASQSGDNSSEQ). Residues 267-329 (RNKKRGIFPK…NARRRIVQPM (63 aa)) constitute a DNA-binding region (homeobox).

This sequence belongs to the TALE/MEIS homeobox family.

It localises to the nucleus. In terms of biological role, a caudalizing protein which is required to pattern the anterior/posterior (A/P) axis during central nervous system (CNS) formation. Inhibits anterior neural expression and acts as a transcriptional activator to induce posterior neural gene expression. Maintains a proper A/P balance required for hindbrain formation by activating the FGF/MAPK pathway, which modulates the planar cell polarity (PCP) pathway. Interacts with retinoid signaling during hindbrain patterning. This chain is Homeobox protein meis3, found in Xenopus tropicalis (Western clawed frog).